We begin with the raw amino-acid sequence, 218 residues long: MSQTAMSETYDFLFKFLVIGNAGTGKSCLLHQFIEKKFKDDSNHTIGVEFGSKIINVGGKYVKLQIWDTAGQERFRSVTRSYYRGAAGALLVYDITSRETYNALTNWLTDARMLASQNIVIILCGNKKDLDTDREVTFLEASRFAQENELMFLETSALTGENVEEAFVQCARKILNKIESGELDPERMGSGIQYGDAALRQLRSPRRAQAPSAQECGC.

GTP-binding residues include G23, T24, G25, K26, S27, C28, S42, H44, and T45. S27 contacts Mg(2+). A Switch 1 motif is present at residues 44 to 49; sequence HTIGVE. Mg(2+) contacts are provided by T45 and D68. Residues 70 to 79 carry the Switch 2 motif; sequence AGQERFRSVT. G71 is a binding site for GTP. Q72 carries the 5-glutamyl serotonin modification. GTP is bound by residues N126, K127, D129, A157, and L158. The residue at position 190 (S190) is a Phosphoserine. S204 bears the Phosphoserine; by CDK1 mark. S-geranylgeranyl cysteine attachment occurs at residues C216 and C218. C218 bears the Cysteine methyl ester mark.

The protein belongs to the small GTPase superfamily. Rab family. In terms of assembly, interacts with RAB11FIP1, RABEP1, ZFYVE20 and RUFY1. Interacts with SGSM1, SGSM2 and SGSM3. Interacts (membrane-bound form) with NDRG1; the interaction involves NDRG1 in vesicular recycling of E-cadherin. Interacts (in GTP-bound form) with GRIPAP1. Interacts with RABEP1 and RBSN. Does not interact with HPS4. Mg(2+) serves as cofactor. Serotonylation of Gln-72 by TGM2 during activation and aggregation of platelets leads to constitutive activation of GTPase activity. In terms of processing, phosphorylated by CDK1 kinase during mitosis.

The protein resides in the membrane. The protein localises to the cytoplasm. It is found in the early endosome membrane. It localises to the recycling endosome membrane. The enzyme catalyses GTP + H2O = GDP + phosphate + H(+). Regulated by guanine nucleotide exchange factors (GEFs) which promote the exchange of bound GDP for free GTP. Regulated by GTPase activating proteins (GAPs) which increase the GTP hydrolysis activity. Inhibited by GDP dissociation inhibitors (GDIs). Its function is as follows. The small GTPases Rab are key regulators of intracellular membrane trafficking, from the formation of transport vesicles to their fusion with membranes. Rabs cycle between an inactive GDP-bound form and an active GTP-bound form that is able to recruit to membranes different sets of downstream effectors directly responsible for vesicle formation, movement, tethering and fusion. RAB4A is involved in protein transport. Also plays a role in vesicular traffic. Mediates VEGFR2 endosomal trafficking to enhance VEGFR2 signaling. Acts as a regulator of platelet alpha-granule release during activation and aggregation of platelets. The chain is Ras-related protein Rab-4A (RAB4A) from Bos taurus (Bovine).